Reading from the N-terminus, the 371-residue chain is MGGSGNWIRSLISNRKPVNDQQEKLSDKSSKKKWKLWRISSESLASSSFKSRGSYAASSLGSELPSFSADEAFTTAMAALIRAPPRDFLMVKREWASTRIQAAFRAFLARQAFRALKAVVRIQAIFRGRQVRKQAAVTLRCMQALVRVQSRVRAHRRAPSDSLELKDPVKQTEKGWCGSPRSIKEVKTKLQMKQEGAIKRERAMVYALTHQSRTCPSPSGRAITHHGLRKSSPGWNWYDDVGTFSRKSSESSVLSEYETVTVRKNNLSSTRVLARPPLLLPPVSSGMSYDSLHDETSTSSTSQSPVAFSSSVLDGGGYYRKPSYMSLTQSTQAKQRQSGLSCNGDARRSAGSDQCTDLYPPGNVWAKSQRS.

Positions 1 to 32 (MGGSGNWIRSLISNRKPVNDQQEKLSDKSSKK) are disordered. Positions 17-29 (PVNDQQEKLSDKS) are enriched in basic and acidic residues. IQ domains lie at 93 to 121 (REWA…AVVR) and 122 to 144 (IQAI…CMQA). The calmodulin-binding stretch occupies residues 125 to 141 (IFRGRQVRKQAAVTLRC). 2 disordered regions span residues 285 to 308 (SGMS…PVAF) and 327 to 371 (LTQS…SQRS). 2 stretches are compositionally biased toward polar residues: residues 297-308 (STSSTSQSPVAF) and 327-341 (LTQS…SGLS).

Belongs to the IQD family. Binds to multiple calmodulin (CaM) in the presence of Ca(2+) and CaM-like proteins.

The protein localises to the nucleus. Its subcellular location is the nucleus envelope. It is found in the cytoplasm. It localises to the cytoskeleton. Functionally, may be involved in cooperative interactions with calmodulins or calmodulin-like proteins. Recruits calmodulin proteins to microtubules, thus being a potential scaffold in cellular signaling and trafficking. May associate with nucleic acids and regulate gene expression at the transcriptional or post-transcriptional level. The sequence is that of Protein IQ-DOMAIN 7 from Arabidopsis thaliana (Mouse-ear cress).